A 109-amino-acid chain; its full sequence is Nucleoid-associated protein LGAS_0369 (109 aa).

Belongs to the YbaB/EbfC family. In terms of assembly, homodimer.

It localises to the cytoplasm. The protein localises to the nucleoid. Binds to DNA and alters its conformation. May be involved in regulation of gene expression, nucleoid organization and DNA protection. This chain is Nucleoid-associated protein LGAS_0369, found in Lactobacillus gasseri (strain ATCC 33323 / DSM 20243 / BCRC 14619 / CIP 102991 / JCM 1131 / KCTC 3163 / NCIMB 11718 / NCTC 13722 / AM63).